Consider the following 269-residue polypeptide: Chromophore lyase CRL, chloroplastic (269 aa).

The chain crosses the membrane as a helical span at residues 19–36 (ARGLVVKTLVLIGGALLI).

Belongs to the CpcT/CpeT biliprotein lyase family. Mostly expressed in shoot apices, to a lower extent, in leaves, inflorescence stems, buds and cotyledons, and, at low levels, in roots and siliques.

Its subcellular location is the plastid. The protein localises to the chloroplast outer membrane. In terms of biological role, covalently attaches a chromophore to Cys residue(s) of phycobiliproteins. Required for plastid division, and involved in cell differentiation and regulation of the cell division plane. Maintenance of plastid homeostasis controls plant preconditioning to stress and stress acclimation. Confers sensitivity to cabbage leaf curl virus (CaLCuV), probably by supporting viral movement. In Arabidopsis thaliana (Mouse-ear cress), this protein is Chromophore lyase CRL, chloroplastic (CRL).